We begin with the raw amino-acid sequence, 177 residues long: uncharacterized protein (177 aa).

This is an uncharacterized protein from Schizosaccharomyces pombe (strain 972 / ATCC 24843) (Fission yeast).